The following is a 372-amino-acid chain: Chaperone protein DnaJ (372 aa).

One can recognise a J domain in the interval 5–70 (DFYEVLGVTK…QKRAAYDRYG (66 aa)). Residues 129 to 207 (GKLASLTLPT…CGGAGRVTRE (79 aa)) form a CR-type zinc finger. Zn(2+) is bound by residues cysteine 142, cysteine 145, cysteine 159, cysteine 162, cysteine 181, cysteine 184, cysteine 195, and cysteine 198. CXXCXGXG motif repeat units follow at residues 142-149 (CEACDGTG), 159-166 (CPTCGGQG), 181-188 (CPQCHGRG), and 195-202 (CQACGGAG).

The protein belongs to the DnaJ family. Homodimer. Zn(2+) serves as cofactor.

It localises to the cytoplasm. Its function is as follows. Participates actively in the response to hyperosmotic and heat shock by preventing the aggregation of stress-denatured proteins and by disaggregating proteins, also in an autonomous, DnaK-independent fashion. Unfolded proteins bind initially to DnaJ; upon interaction with the DnaJ-bound protein, DnaK hydrolyzes its bound ATP, resulting in the formation of a stable complex. GrpE releases ADP from DnaK; ATP binding to DnaK triggers the release of the substrate protein, thus completing the reaction cycle. Several rounds of ATP-dependent interactions between DnaJ, DnaK and GrpE are required for fully efficient folding. Also involved, together with DnaK and GrpE, in the DNA replication of plasmids through activation of initiation proteins. In Beijerinckia indica subsp. indica (strain ATCC 9039 / DSM 1715 / NCIMB 8712), this protein is Chaperone protein DnaJ.